The following is a 233-amino-acid chain: Adenosylcobinamide-GDP ribazoletransferase (233 aa).

Helical transmembrane passes span 24 to 44, 46 to 66, 96 to 116, 117 to 137, 158 to 178, 181 to 198, and 209 to 229; these read LWAL…VLYL, LPLS…LLHL, IAGV…LPLL, PFYA…LALA, QLTL…YIEP, ISSL…RLSL, and IGAV…VVWV.

It belongs to the CobS family. The cofactor is Mg(2+).

Its subcellular location is the cell membrane. The catalysed reaction is alpha-ribazole + adenosylcob(III)inamide-GDP = adenosylcob(III)alamin + GMP + H(+). It catalyses the reaction alpha-ribazole 5'-phosphate + adenosylcob(III)inamide-GDP = adenosylcob(III)alamin 5'-phosphate + GMP + H(+). Its pathway is cofactor biosynthesis; adenosylcobalamin biosynthesis; adenosylcobalamin from cob(II)yrinate a,c-diamide: step 7/7. Its function is as follows. Joins adenosylcobinamide-GDP and alpha-ribazole to generate adenosylcobalamin (Ado-cobalamin). Also synthesizes adenosylcobalamin 5'-phosphate from adenosylcobinamide-GDP and alpha-ribazole 5'-phosphate. This is Adenosylcobinamide-GDP ribazoletransferase from Thermococcus gammatolerans (strain DSM 15229 / JCM 11827 / EJ3).